We begin with the raw amino-acid sequence, 148 residues long: MSDTPFWQRKTLDEMTDAEWESLCDGCGQCCLHKLMDEDTDEIYFTNVACRQLNIKTCQCRHYERRFEFEPDCIKLTRENLPDFEWLPMTCAYRLLAEGKPLPTWHPLLTGSKAAMHGERISVRHIAVKESEVRDWQDHILNKPSWAE.

The protein belongs to the UPF0260 family.

The polypeptide is UPF0260 protein YcgN (Salmonella paratyphi A (strain AKU_12601)).